The primary structure comprises 904 residues: Phosphoenolpyruvate carboxylase (904 aa).

The tract at residues 52–71 (ISRRESDAPPSTLSEQLTGR) is disordered. A compositionally biased stretch (polar residues) spans 60–70 (PPSTLSEQLTG). Active-site residues include histidine 151 and lysine 570.

This sequence belongs to the PEPCase type 1 family. It depends on Mg(2+) as a cofactor.

The enzyme catalyses oxaloacetate + phosphate = phosphoenolpyruvate + hydrogencarbonate. Forms oxaloacetate, a four-carbon dicarboxylic acid source for the tricarboxylic acid cycle. In Xanthomonas euvesicatoria pv. vesicatoria (strain 85-10) (Xanthomonas campestris pv. vesicatoria), this protein is Phosphoenolpyruvate carboxylase.